The chain runs to 1784 residues: MVKLANPLYTEWILEAIQKIKKQKQRPSEERICHAVSTSHGLDKKTVSEQLELSVQDGSVLKVTNKGLASYKDPDNPGRFSSVKPGTFPKSTKESRGSCNDLRNVDWNKLLRRAIEGLEEPNGSSLKNIEKYLRSQSDLTSTTNNPAFQQRLRLGAKRAVNNGRLLKDGPQYRVNYGSLDGKGAPQYPSAFPSSLPPVSLLPHEKDQPRADPIPICSFCLGTKESNREKKPEELLSCADCGSSGHPSCLKFCPELTTNVKALRWQCIECKTCSACRVQGRNADNMLFCDSCDRGFHMECCDPPLSRMPKGMWICQVCRPKKKGRKLLHEKAAQIKRRYAKPIGRPKNKLKQRLLSVTSDEGSMNAFTGRGSPDTEIKINIKQESADVNVIGNKDVVTEEDLDVFKQAQELSWEKIECESGVEDCGRYPSVIEFGKYEIQTWYSSPYPQEYARLPKLYLCEFCLKYMKSKNILLRHSKKCGWFHPPANEIYRRKDLSVFEVDGNMSKIYCQNLCLLAKLFLDHKTLYYDVEPFLFYVLTKNDEKGCHLVGYFSKEKLCQQKYNVSCIMIMPQHQRQGFGRFLIDFSYLLSRREGQAGSPEKPLSDLGRLSYLAYWKSVILEYLYHHHERHISIKAISRATGMCPHDIATTLQHLHMIDKRDGGFVIIRREKLILSHMEKLKTCSRANELDPDSLRWTPILISNAAVSEEEREAEKEAERLMEQASCWEKEEQEVLSTRANSRQSPAKVQSKNKYLHSPESRPVTGERGQLLELSKESSEEEEEEEEDEEEEDEEEEEEEEEDEEEEEEEEEEEEEEEEENIQSSPPRLTKPQSVAIKRKRPFVLKKKRGRKRRRINSSVTTETISETTEVLNEPFDNSDEERPMPQLEPTCEIEVEEDGRKPVLRKAFQHQPGKKRQTEEEEGKDNHCFKNADPCRNNMNDDSRNLKEGSKDNPEPLKCKQAWPKGTKRGLSKWRQNKERKTGFKLNLYTPPETPLEPDEQVTVEEQKETSEGKTSPTPISIEEEAKEAGEALLPQEENRRQETCAPVSPNTSPGEKPEDDLIKPEEEEEEEEEEEEEEGEEEEEEGGNVEKDPDGAKSQEKEEPEISPEKEDSARLDDHEEEEEEDEEPSHNEDHDADDEDDSHMESAEVEKEELPRESFKEVLENEEAFLDLNVQPSHSNPEVLMDCGVDLTASCNSEPKELAGDPEAVPESDEEPPPGEQAQKQDQKNSKEVDTEFKEGNPATMEIDSETVQAVQSLTQESSEQDDTFQDCAETQEACRSLQNYTRADQSPQIATTLDDCQQSDHSSPVSSVHSHPGQSVRSVNSPSVPALENSYAQISPDQSAISVPSLQNMETSPMMDVPSVSDHSQQVVDSGFSDLGSIESTTENYENPSSYDSTMGGSICGNGSSQNSCSYSNLTSSSLTQSSCAVTQQMSNISGSCSMLQQTSISSPPTCSVKSPQGCVVERPPSSSQQLAQCSMAANFTPPMQLAEIPETGNANIGLYERMGQSDFGAGHYPQPSATFSLAKLQQLTNTLIDHSLPYSHSAAVTSYANSASLSTPLSNTGLVQLSQSPHSVPGGPQAQATMTPPPNLTPPPMNLPPPLLQRNMAASNIGISHSQRLQTQIASKGHVSMRTKSASLSPAAATHQSQIYGRSQTVAMQGPARTLTMQRGMNMSVNLMPAPAYNVNSVNMNMNTLNAMNGYSMSQPMMNSGYHSNHGYMNQTPQYPMQMQMGMMGTQPYAQQPMQTPPHGNMMYTAPGHHGYMNTGMSKQSLNGSYMRR.

In terms of domain architecture, SAMD1-like winged helix (WH) spans 1–77 (MVKLANPLYT…LASYKDPDNP (77 aa)). Residues 72–98 (KDPDNPGRFSSVKPGTFPKSTKESRGS) form a disordered region. Positions 103–176 (RNVDWNKLLR…KDGPQYRVNY (74 aa)) constitute an H15 domain. PHD-type zinc fingers lie at residues 213-272 (IPIC…CKTC) and 269-320 (CKTC…CRPK). Serine 355 is modified (phosphoserine). The segment at 361–425 (GSMNAFTGRG…ECESGVEDCG (65 aa)) is negatively regulates HAT activity. Residue lysine 381 forms a Glycyl lysine isopeptide (Lys-Gly) (interchain with G-Cter in SUMO2) linkage. Residues 423–697 (DCGRYPSVIE…LDPDSLRWTP (275 aa)) form the MYST-type HAT domain. The tract at residues 426–716 (RYPSVIEFGK…EEEREAEKEA (291 aa)) is catalytic. The C2HC MYST-type zinc-finger motif lies at 456–481 (LYLCEFCLKYMKSKNILLRHSKKCGW). The segment at 460-716 (EFCLKYMKSK…EEEREAEKEA (257 aa)) is interaction with BRPF1. Position 523 is an N6-acetyllysine; by autocatalysis (lysine 523). Residues 564–568 (SCIMI) and 573–579 (QRQGFGR) contribute to the acetyl-CoA site. The active-site Proton donor/acceptor is the glutamate 599. An acetyl-CoA-binding site is contributed by serine 603. 4 disordered regions span residues 730–884 (EQEV…RPMP), 904–1163 (RKAF…FKEV), 1195–1273 (SCNS…FQDC), and 1291–1330 (QSPQIATTLDDCQQSDHSSPVSSVHSHPGQSVRSVNSPSV). Polar residues predominate over residues 733 to 751 (VLSTRANSRQSPAKVQSKN). Residues lysine 746, lysine 750, and lysine 752 each carry the N6-acetyllysine modification. Phosphoserine is present on serine 756. Residues 777–819 (SEEEEEEEEDEEEEDEEEEEEEEEDEEEEEEEEEEEEEEEEEN) are compositionally biased toward acidic residues. Positions 820-831 (IQSSPPRLTKPQ) are enriched in polar residues. Residues 835-854 (IKRKRPFVLKKKRGRKRRRI) are compositionally biased toward basic residues. Residues 856–869 (SSVTTETISETTEV) are compositionally biased toward low complexity. Over residues 904 to 914 (RKAFQHQPGKK) the composition is skewed to basic residues. Composition is skewed to basic and acidic residues over residues 938 to 957 (MNDDSRNLKEGSKDNPEPLK) and 1055 to 1064 (EKPEDDLIKP). Residues 1065–1087 (EEEEEEEEEEEEEEGEEEEEEGG) show a composition bias toward acidic residues. Composition is skewed to basic and acidic residues over residues 1088-1101 (NVEKDPDGAKSQEK) and 1107-1118 (SPEKEDSARLDD). Acidic residues predominate over residues 1119–1128 (HEEEEEEDEE). A compositionally biased stretch (basic and acidic residues) spans 1144-1163 (HMESAEVEKEELPRESFKEV). A compositionally biased stretch (acidic residues) spans 1209-1218 (AVPESDEEPP). The span at 1224-1240 (QKQDQKNSKEVDTEFKE) shows a compositional bias: basic and acidic residues. 2 stretches are compositionally biased toward polar residues: residues 1251–1263 (ETVQAVQSLTQES) and 1291–1302 (QSPQIATTLDDC). Residues 1271–1784 (QDCAETQEAC…QSLNGSYMRR (514 aa)) form an interaction with RUNX1 and RUNX2 region. Low complexity predominate over residues 1305 to 1322 (SDHSSPVSSVHSHPGQSV).

The protein belongs to the MYST (SAS/MOZ) family. In terms of assembly, component of the MOZ/MORF complex composed at least of ING5, KAT6A, KAT6B, MEAF6 and one of BRPF1, BRD1/BRPF2 and BRPF3. Interacts with RUNX1 and RUNX2. In terms of processing, autoacetylation at Lys-523 is required for proper function.

It localises to the nucleus. The catalysed reaction is L-lysyl-[protein] + acetyl-CoA = N(6)-acetyl-L-lysyl-[protein] + CoA + H(+). In terms of biological role, histone acetyltransferase which may be involved in both positive and negative regulation of transcription. Required for RUNX2-dependent transcriptional activation. May be involved in cerebral cortex development. Component of the MOZ/MORF complex which has a histone H3 acetyltransferase activity. In Macaca fascicularis (Crab-eating macaque), this protein is Histone acetyltransferase KAT6B (KAT6B).